The chain runs to 260 residues: Hydroxyethylthiazole kinase (260 aa).

Met-49 provides a ligand contact to substrate. The ATP site is built by Arg-124 and Thr-170. Gly-197 provides a ligand contact to substrate.

This sequence belongs to the Thz kinase family. Requires Mg(2+) as cofactor.

It carries out the reaction 5-(2-hydroxyethyl)-4-methylthiazole + ATP = 4-methyl-5-(2-phosphooxyethyl)-thiazole + ADP + H(+). It functions in the pathway cofactor biosynthesis; thiamine diphosphate biosynthesis; 4-methyl-5-(2-phosphoethyl)-thiazole from 5-(2-hydroxyethyl)-4-methylthiazole: step 1/1. In terms of biological role, catalyzes the phosphorylation of the hydroxyl group of 4-methyl-5-beta-hydroxyethylthiazole (THZ). In Yersinia enterocolitica serotype O:8 / biotype 1B (strain NCTC 13174 / 8081), this protein is Hydroxyethylthiazole kinase.